Reading from the N-terminus, the 432-residue chain is Adenylosuccinate synthetase (432 aa).

GTP contacts are provided by residues 13-19 and 41-43; these read GDEGKGK and GHT. Asp14 functions as the Proton acceptor in the catalytic mechanism. 2 residues coordinate Mg(2+): Asp14 and Gly41. IMP contacts are provided by residues 14–17, 39–42, Thr130, Arg144, Gln225, Thr240, and Arg304; these read DEGK and NAGH. Residue His42 is the Proton donor of the active site. 300–306 contributes to the substrate binding site; sequence ATTGRSR. GTP is bound by residues Arg306, 332 to 334, and 415 to 417; these read KLD and STG.

The protein belongs to the adenylosuccinate synthetase family. Homodimer. It depends on Mg(2+) as a cofactor.

The protein localises to the cytoplasm. It catalyses the reaction IMP + L-aspartate + GTP = N(6)-(1,2-dicarboxyethyl)-AMP + GDP + phosphate + 2 H(+). It participates in purine metabolism; AMP biosynthesis via de novo pathway; AMP from IMP: step 1/2. Its function is as follows. Plays an important role in the de novo pathway of purine nucleotide biosynthesis. Catalyzes the first committed step in the biosynthesis of AMP from IMP. This is Adenylosuccinate synthetase from Yersinia enterocolitica serotype O:8 / biotype 1B (strain NCTC 13174 / 8081).